Here is a 563-residue protein sequence, read N- to C-terminus: Forkhead box protein O (563 aa).

Disordered stretches follow at residues 1 to 72 (MDDF…DPQQ) and 177 to 243 (KSVR…SYQL). Threonine 43 carries the phosphothreonine; by PKB/AKT1 modification. A compositionally biased stretch (polar residues) spans 58–72 (TKASNQQLANGDPQQ). Residues 90–196 (WGNLSYADLI…ETSRYEKRRG (107 aa)) constitute a DNA-binding region (fork-head). Position 185 is a phosphoserine; by PKB/AKT1 (serine 185). Residues 216–225 (ATPSPSSSVS) are compositionally biased toward polar residues. The residue at position 253 (serine 253) is a Phosphoserine; by PKB/AKT1. A phosphoserine mark is found at serine 256, serine 257, and serine 262. The interval 317 to 371 (AASGLPTQPPPPYQPPQHPQHTQGYALNGPGLSPNSVTTTMSPAYPNSEPSSDSL) is disordered. The span at 323-334 (TQPPPPYQPPQH) shows a compositional bias: pro residues. Residues 349–358 (SPNSVTTTMS) show a composition bias toward polar residues.

In terms of assembly, interacts with melt.

Its subcellular location is the cytoplasm. The protein localises to the nucleus. Functionally, transcription factor involved in the regulation of the insulin signaling pathway. Consistently activates both the downstream target Thor\d4EBP and the feedback control target InR. Involved in negative regulation of the cell cycle, modulating cell growth and proliferation. In response to cellular stresses, such as nutrient deprivation or increased levels of reactive oxygen species, foxo is activated and inhibits growth through the action of target genes such as Thor. Foxo activated in the adult fat body can regulate lifespan in adults; an insulin peptide itself may function as one secondary messenger of insulin-regulated aging. Also regulates Lip4, homolog of human acid lipases, thereby acting as a key modulator of lipid metabolism by insulin signaling and integrates insulin responses to glucose and lipid homeostasis. This is Forkhead box protein O from Drosophila mojavensis (Fruit fly).